A 78-amino-acid chain; its full sequence is DNA-directed RNA polymerase subunit Rpo5 (78 aa).

This sequence belongs to the archaeal Rpo5/eukaryotic RPB5 RNA polymerase subunit family. In terms of assembly, part of the RNA polymerase complex.

It is found in the cytoplasm. It carries out the reaction RNA(n) + a ribonucleoside 5'-triphosphate = RNA(n+1) + diphosphate. Functionally, DNA-dependent RNA polymerase (RNAP) catalyzes the transcription of DNA into RNA using the four ribonucleoside triphosphates as substrates. This chain is DNA-directed RNA polymerase subunit Rpo5, found in Methanococcus maripaludis (strain C6 / ATCC BAA-1332).